Reading from the N-terminus, the 177-residue chain is Large ribosomal subunit protein uL6 (177 aa).

Belongs to the universal ribosomal protein uL6 family. In terms of assembly, part of the 50S ribosomal subunit.

Functionally, this protein binds to the 23S rRNA, and is important in its secondary structure. It is located near the subunit interface in the base of the L7/L12 stalk, and near the tRNA binding site of the peptidyltransferase center. The protein is Large ribosomal subunit protein uL6 of Cereibacter sphaeroides (strain ATCC 17029 / ATH 2.4.9) (Rhodobacter sphaeroides).